The following is a 135-amino-acid chain: Galectin-1 (135 aa).

An N-acetylalanine modification is found at Ala-2. In terms of domain architecture, Galectin spans 4-135 (GLVASNLNLK…DFKIKCVAFD (132 aa)). Lys-13 and Lys-29 each carry N6-acetyllysine. At Ser-30 the chain carries Phosphoserine. Residues 45 to 49 (HFNPR), His-53, Asn-62, and 69 to 72 (WGTE) each bind a beta-D-galactoside. Lys-108 carries the N6-acetyllysine; alternate modification. The residue at position 108 (Lys-108) is an N6-succinyllysine; alternate. Position 128 is an N6-acetyllysine (Lys-128).

As to quaternary structure, homodimer. Binds LGALS3BP. Interacts with CD2, CD3, CD4, CD6, CD7, CD43, ALCAM and CD45. Interacts with laminin (via poly-N-acetyllactosamine). Interacts with SUSD2.

The protein resides in the secreted. Its subcellular location is the extracellular space. The protein localises to the extracellular matrix. Functionally, lectin that binds beta-galactoside and a wide array of complex carbohydrates. Plays a role in regulating apoptosis, cell proliferation and cell differentiation. Inhibits CD45 protein phosphatase activity and therefore the dephosphorylation of Lyn kinase. Strong inducer of T-cell apoptosis. The protein is Galectin-1 (LGALS1) of Pongo abelii (Sumatran orangutan).